A 442-amino-acid polypeptide reads, in one-letter code: Protein IQ-DOMAIN 33 (442 aa).

The IQ domain maps to 159–188 (EEDAAVIIQSAFRSYLAIRRSKEEEETFAK). The disordered stretch occupies residues 184–212 (ETFAKEESFSGEESQDNASMGTSLEAQTG). Positions 199 to 212 (DNASMGTSLEAQTG) are enriched in polar residues. Residues 270-282 (RERALAYAFSQQL) form a calmodulin-binding region. A disordered region spans residues 375-442 (EKSSFKPSIS…ETSHKLNSST (68 aa)). Basic residues predominate over residues 383 to 402 (ISKRKSVPSYKSQRKHHKLQ). The short motif at 385 to 392 (KRKSVPSY) is the Nuclear localization signal element.

The protein belongs to the IQD family. In terms of assembly, binds to multiple calmodulin (CaM) in the presence of Ca(2+) and CaM-like proteins.

Its subcellular location is the nucleus. May be involved in cooperative interactions with calmodulins or calmodulin-like proteins. Recruits calmodulin proteins to microtubules, thus being a potential scaffold in cellular signaling and trafficking. May associate with nucleic acids and regulate gene expression at the transcriptional or post-transcriptional level. The sequence is that of Protein IQ-DOMAIN 33 from Arabidopsis thaliana (Mouse-ear cress).